A 303-amino-acid chain; its full sequence is N-acetyl-D-glucosamine kinase (303 aa).

ATP is bound by residues 4–11 and 133–140; these read GFDIGGTK and GVGGGLIF. The Zn(2+) site is built by His157, Cys177, Cys179, and Cys184.

This sequence belongs to the ROK (NagC/XylR) family. NagK subfamily.

It carries out the reaction N-acetyl-D-glucosamine + ATP = N-acetyl-D-glucosamine 6-phosphate + ADP + H(+). It functions in the pathway cell wall biogenesis; peptidoglycan recycling. Its function is as follows. Catalyzes the phosphorylation of N-acetyl-D-glucosamine (GlcNAc) derived from cell-wall degradation, yielding GlcNAc-6-P. This chain is N-acetyl-D-glucosamine kinase, found in Escherichia coli O6:H1 (strain CFT073 / ATCC 700928 / UPEC).